A 95-amino-acid polypeptide reads, in one-letter code: MSDDIQQTEVSGTGVGIVTGKVVSNKMDKSITVLIERKVRHPLYGKQIRRSTKIKAHDENNVCKEGDVVRIIETRPISKTKSWKLVDVVETAEKI.

It belongs to the universal ribosomal protein uS17 family. As to quaternary structure, part of the 30S ribosomal subunit.

In terms of biological role, one of the primary rRNA binding proteins, it binds specifically to the 5'-end of 16S ribosomal RNA. This chain is Small ribosomal subunit protein uS17, found in Psychrobacter sp. (strain PRwf-1).